The primary structure comprises 600 residues: Novobiocin biosynthesis protein H (600 aa).

Residues 505-526 (GGKTDRAGLPDPVKATQPAGLG) form a disordered region. The Carrier domain maps to 526–600 (GPRTPAEKVL…QLAAIATLEE (75 aa)). Serine 561 is modified (O-(pantetheine 4'-phosphoryl)serine).

Belongs to the ATP-dependent AMP-binding enzyme family.

The protein operates within antibiotic biosynthesis; novobiocin biosynthesis. Together with NovI, involved in the formation of a beta-OH-Tyr intermediate in the novobiocin biosynthesis pathway, an aminocoumarin family antibiotic that targets bacterial DNA gyrases. The ATP-dependent AMP-binding region activates L-Tyr as L-tyrosyl-AMP and then transfers the L-tyrosyl group to the acyl carrier domain through thioester formation to form a tyrosyl-S intermediate that is covalently tethered to NovH (L-Tyr-S-NovH). In Streptomyces niveus (Streptomyces spheroides), this protein is Novobiocin biosynthesis protein H (novH).